The following is a 105-amino-acid chain: UPF0235 protein RT0827 (105 aa).

It belongs to the UPF0235 family.

This is UPF0235 protein RT0827 from Rickettsia typhi (strain ATCC VR-144 / Wilmington).